The following is a 755-amino-acid chain: MKHIGRIVSFPIGLVLIAVGIIIFVVVNRTIKDEFKKAAVVIPDNGAEEIVDPWVRFIGNEGDPNNVRTYTFMAYNLTNPIETMQGHLPKYQEVGPYSYNYIYERINANLYEDDEKLSFKLWKRYFPIVADGYRDPTKDTIYHFNLVYGAAVKQAGSEVALSVALTAAAMGKIITGLTDPSFKVKAGFAAAPTVTAGAFSNLLTAAGNDPATACGLWQTSTSSSTPLVPFSVPIIAGSPSDISQAQCQALFDPSNKFSLTDPTNVGVYLLNPAGSKAALLASPFGLTSVQADLIMKYQLALTSTFVPTTLVSRFAECSDPKTCTNNPLYFGLLQWAKNPSLLGQSVFAIPNSGVPAAPEFGIYTSSELSLTKAGSLFLNTSTINLITPTSIGTILVYGQKLKADPTSIPPALYAPFSSGEFDAIVKYTGYIMAAFVDGDIIKNQIFKDYQGGPIVKHTVHDFLFNSTDPLLKLMYPDTPSAWVSSPLDNIQDVKVANATLHTDEIYTGVGDIDLVSSPITFEGEEELNYNKKIKVSGSFAEQLPPSYLSKDPEAPVNVFTDEFARSLSFRKEVGGNFGGIPYYRYRINESNWEINPDYFQTIPYLLNLTSIKSGAPAYLSRPRLKGIDVGYYYKAGITDLINDDEDLDVFADYEPRSGKAIHGRYSLQVNTYIQGSDGTNSTLYNKYSAFRSDVVHPMFWGVNIIAATQEQIDILTKAYKVDSFRYAITVILIVVGGFLSLISGGLFVLDKIIDL.

The Cytoplasmic segment spans residues 1 to 6 (MKHIGR). The helical transmembrane segment at 7–27 (IVSFPIGLVLIAVGIIIFVVV) threads the bilayer. 8 N-linked (GlcNAc...) asparagine glycosylation sites follow: asparagine 28, asparagine 76, asparagine 379, asparagine 465, asparagine 497, asparagine 588, asparagine 607, and asparagine 680. Residues 28-727 (NRTIKDEFKK…AYKVDSFRYA (700 aa)) are Lumenal-facing. A helical membrane pass occupies residues 728–748 (ITVILIVVGGFLSLISGGLFV). Topologically, residues 749–755 (LDKIIDL) are cytoplasmic. A Di-leucine motif motif is present at residues 752–753 (II).

The protein belongs to the CD36 family. In terms of processing, heavily glycosylated.

The protein localises to the lysosome membrane. May act as a lysosomal receptor. May be involved in macropinocytosis and fluid phase exocytosis. In Dictyostelium discoideum (Social amoeba), this protein is Lysosome membrane protein 2-B (lmpB).